The sequence spans 148 residues: Methylglyoxal synthase (148 aa).

Residues 4–148 (VSVPAIKRIV…LSYNTKVKKD (145 aa)) enclose the MGS-like domain. Residues His-17, Lys-21, 43 to 46 (TGTT), and 63 to 64 (SG) each bind substrate. Catalysis depends on Asp-69, which acts as the Proton donor/acceptor. A substrate-binding site is contributed by His-96.

Belongs to the methylglyoxal synthase family.

It carries out the reaction dihydroxyacetone phosphate = methylglyoxal + phosphate. Its function is as follows. Catalyzes the formation of methylglyoxal from dihydroxyacetone phosphate. The polypeptide is Methylglyoxal synthase (Leptospira interrogans serogroup Icterohaemorrhagiae serovar copenhageni (strain Fiocruz L1-130)).